Reading from the N-terminus, the 97-residue chain is Small ribosomal subunit protein uS19 (97 aa).

It belongs to the universal ribosomal protein uS19 family.

Functionally, protein S19 forms a complex with S13 that binds strongly to the 16S ribosomal RNA. The chain is Small ribosomal subunit protein uS19 from Salinibacter ruber (strain DSM 13855 / M31).